A 556-amino-acid chain; its full sequence is Arginine--tRNA ligase (556 aa).

The 'HIGH' region motif lies at 132-142; sequence ANPTGDLHLGH.

It belongs to the class-I aminoacyl-tRNA synthetase family. In terms of assembly, monomer.

It localises to the cytoplasm. The enzyme catalyses tRNA(Arg) + L-arginine + ATP = L-arginyl-tRNA(Arg) + AMP + diphosphate. In Bacillus subtilis (strain 168), this protein is Arginine--tRNA ligase (argS).